A 146-amino-acid chain; its full sequence is ATP synthase epsilon chain (146 aa).

The protein belongs to the ATPase epsilon chain family. In terms of assembly, F-type ATPases have 2 components, CF(1) - the catalytic core - and CF(0) - the membrane proton channel. CF(1) has five subunits: alpha(3), beta(3), gamma(1), delta(1), epsilon(1). CF(0) has three main subunits: a, b and c.

It is found in the cell membrane. Functionally, produces ATP from ADP in the presence of a proton gradient across the membrane. This is ATP synthase epsilon chain from Lactobacillus delbrueckii subsp. bulgaricus (strain ATCC 11842 / DSM 20081 / BCRC 10696 / JCM 1002 / NBRC 13953 / NCIMB 11778 / NCTC 12712 / WDCM 00102 / Lb 14).